The primary structure comprises 2742 residues: Neurobeachin-like protein 2 (2742 aa).

Disordered stretches follow at residues 1312 to 1333 and 1356 to 1434; these read ALSP…PSES and LERA…QQTP. Over residues 1384 to 1394 the composition is skewed to pro residues; the sequence is TPSPLDGPRPF. A compositionally biased stretch (polar residues) spans 1421–1433; the sequence is GDDTSNTSNPQQT. A Phosphothreonine modification is found at Thr-1855. The region spanning 1903 to 2028 is the BEACH-type PH domain; the sequence is EKREKLVLSA…LRNQVYSLLL (126 aa). Residues 2041–2333 form the BEACH domain; that stretch reads RSPLEMLRAS…QLLKEPHPPR (293 aa). 7 WD repeats span residues 2374 to 2412, 2436 to 2479, 2482 to 2519, 2532 to 2570, 2577 to 2619, 2627 to 2662, and 2670 to 2705; these read LVLA…TWLP, KLLS…SLPR, LLNQ…VWRL, KPVQ…IHTV, AALR…TYSL, RLRA…ILHL, and PPLP…VGAG. A phosphoserine mark is found at Ser-2727 and Ser-2730.

This sequence belongs to the WD repeat neurobeachin family.

The protein resides in the endoplasmic reticulum. Its function is as follows. Probably involved in thrombopoiesis. Plays a role in the development or secretion of alpha-granules, that contain several growth factors important for platelet biogenesis. The polypeptide is Neurobeachin-like protein 2 (Nbeal2) (Mus musculus (Mouse)).